A 396-amino-acid chain; its full sequence is Putative amidohydrolase YhaA (396 aa).

Aspartate 85 is a catalytic residue. The active-site Proton acceptor is glutamate 143. Zn(2+)-binding residues include glutamate 144, arginine 182, and histidine 368.

The protein belongs to the peptidase M20A family. Zn(2+) serves as cofactor. Co(2+) is required as a cofactor.

This Bacillus subtilis (strain 168) protein is Putative amidohydrolase YhaA (yhaA).